Reading from the N-terminus, the 261-residue chain is Imidazole glycerol phosphate synthase subunit HisF (261 aa).

Residues Asp12 and Asp131 contribute to the active site.

This sequence belongs to the HisA/HisF family. In terms of assembly, heterodimer of HisH and HisF.

It is found in the cytoplasm. The catalysed reaction is 5-[(5-phospho-1-deoxy-D-ribulos-1-ylimino)methylamino]-1-(5-phospho-beta-D-ribosyl)imidazole-4-carboxamide + L-glutamine = D-erythro-1-(imidazol-4-yl)glycerol 3-phosphate + 5-amino-1-(5-phospho-beta-D-ribosyl)imidazole-4-carboxamide + L-glutamate + H(+). It participates in amino-acid biosynthesis; L-histidine biosynthesis; L-histidine from 5-phospho-alpha-D-ribose 1-diphosphate: step 5/9. IGPS catalyzes the conversion of PRFAR and glutamine to IGP, AICAR and glutamate. The HisF subunit catalyzes the cyclization activity that produces IGP and AICAR from PRFAR using the ammonia provided by the HisH subunit. The protein is Imidazole glycerol phosphate synthase subunit HisF of Brucella melitensis biotype 2 (strain ATCC 23457).